Reading from the N-terminus, the 261-residue chain is Putative methyltransferase MJ0046 (261 aa).

The protein belongs to the methyltransferase superfamily.

This Methanocaldococcus jannaschii (strain ATCC 43067 / DSM 2661 / JAL-1 / JCM 10045 / NBRC 100440) (Methanococcus jannaschii) protein is Putative methyltransferase MJ0046.